The primary structure comprises 114 residues: DNA-directed RNA polymerase subunit omega (114 aa).

Belongs to the RNA polymerase subunit omega family. The RNAP catalytic core consists of 2 alpha, 1 beta, 1 beta' and 1 omega subunit. When a sigma factor is associated with the core the holoenzyme is formed, which can initiate transcription.

The catalysed reaction is RNA(n) + a ribonucleoside 5'-triphosphate = RNA(n+1) + diphosphate. In terms of biological role, promotes RNA polymerase assembly. Latches the N- and C-terminal regions of the beta' subunit thereby facilitating its interaction with the beta and alpha subunits. The chain is DNA-directed RNA polymerase subunit omega from Novosphingobium aromaticivorans (strain ATCC 700278 / DSM 12444 / CCUG 56034 / CIP 105152 / NBRC 16084 / F199).